Reading from the N-terminus, the 688-residue chain is Small ribosomal subunit protein mS39 (688 aa).

The N-terminal 37 residues, methionine 1–tyrosine 37, are a transit peptide targeting the mitochondrion. Lysine 126 bears the N6-acetyllysine mark. PPR repeat units follow at residues isoleucine 149 to valine 183, serine 184 to glutamate 219, asparagine 258 to alanine 292, aspartate 293 to proline 333, asparagine 334 to proline 370, serine 371 to aspartate 412, aspartate 415 to lysine 449, arginine 457 to proline 491, histidine 492 to phenylalanine 526, and proline 575 to proline 609. The disordered stretch occupies residues glycine 667 to lysine 688.

It belongs to the mitochondrion-specific ribosomal protein mS39 family. As to quaternary structure, component of the mitochondrial ribosome small subunit (28S) which comprises a 12S rRNA and about 30 distinct proteins. Associated with the 12S mitochondrial rRNA (12S mt-rRNA).

The protein localises to the mitochondrion. Mitochondrial RNA-binding protein that has a role in mitochondrial translation. The sequence is that of Small ribosomal subunit protein mS39 (PTCD3) from Bos taurus (Bovine).